A 599-amino-acid polypeptide reads, in one-letter code: Glucose-6-phosphate 1-dehydrogenase 3, chloroplastic (599 aa).

The segment covering 1–18 has biased composition (low complexity); it reads MSSLSCPTYRSRTSSSSP. Positions 1–23 are disordered; sequence MSSLSCPTYRSRTSSSSPFLSNH. Residues 1–66 constitute a chloroplast transit peptide; that stretch reads MSSLSCPTYR…RSQRRSVQSS (66 aa). Residue V67 is modified to N-acetylvaline. NADP(+) is bound by residues 119 to 126 and R153; that span reads GASGDLAK. A disulfide bridge links C171 with C179. Residue K256 coordinates NADP(+). D-glucose 6-phosphate contacts are provided by residues K256, 286 to 290, E324, and D343; that span reads HYLGK. Residue H348 is the Proton acceptor of the active site. K441 provides a ligand contact to NADP(+). D-glucose 6-phosphate contacts are provided by K444 and R449. 2 residues coordinate NADP(+): R454 and R483. Q485 serves as a coordination point for D-glucose 6-phosphate. NADP(+) is bound by residues 491–493 and R576; that span reads YLK.

It belongs to the glucose-6-phosphate dehydrogenase family. In terms of assembly, forms homodimer. Interacts with G6PD1. Expressed in roots, flowers and siliques.

It is found in the plastid. The protein localises to the chloroplast stroma. It catalyses the reaction D-glucose 6-phosphate + NADP(+) = 6-phospho-D-glucono-1,5-lactone + NADPH + H(+). It functions in the pathway carbohydrate degradation; pentose phosphate pathway; D-ribulose 5-phosphate from D-glucose 6-phosphate (oxidative stage): step 1/3. With respect to regulation, regulated by metabolites. Post-translationally inactivated by cysteine-mediated redox modification via the ferredoxin-thioredoxin system in the light and this avoids futile cycles with photosynthetic CO2 fixation. Catalyzes the rate-limiting step of the oxidative pentose-phosphate pathway, which represents a route for the dissimilation of carbohydrates besides glycolysis. The main function of this enzyme is to provide reducing power (NADPH) and pentose phosphates for fatty acid and nucleic acid synthesis which are involved in membrane synthesis and cell division. The protein is Glucose-6-phosphate 1-dehydrogenase 3, chloroplastic of Arabidopsis thaliana (Mouse-ear cress).